The primary structure comprises 249 residues: ATP synthase subunit a (249 aa).

6 helical membrane-spanning segments follow: residues 26–46 (FTNSSLFMVATVAAAGAFLYL), 84–104 (FFPFVFSLFMFVLVANLLGLF), 114–134 (IVVTFALALLVIGTVLVYGFW), 143–163 (LFVPEGVPGVLLPLVVLIEVI), 185–205 (ITLKVFAGFVTSLGALGVAGA), and 208–228 (AVLPLAMTVALTGLELLVAFL).

This sequence belongs to the ATPase A chain family. As to quaternary structure, F-type ATPases have 2 components, CF(1) - the catalytic core - and CF(0) - the membrane proton channel. CF(1) has five subunits: alpha(3), beta(3), gamma(1), delta(1), epsilon(1). CF(0) has three main subunits: a(1), b(2) and c(9-12). The alpha and beta chains form an alternating ring which encloses part of the gamma chain. CF(1) is attached to CF(0) by a central stalk formed by the gamma and epsilon chains, while a peripheral stalk is formed by the delta and b chains.

It is found in the cell inner membrane. Its function is as follows. Key component of the proton channel; it plays a direct role in the translocation of protons across the membrane. The protein is ATP synthase subunit a of Chelativorans sp. (strain BNC1).